The following is a 97-amino-acid chain: NADH-ubiquinone oxidoreductase chain 4L (97 aa).

3 helical membrane-spanning segments follow: residues 1 to 21, 25 to 45, and 57 to 77; these read MSYL…IILN, LIIM…LLLF, and IFAI…LAIM.

The protein belongs to the complex I subunit 4L family.

The protein resides in the mitochondrion membrane. It carries out the reaction a ubiquinone + NADH + 5 H(+)(in) = a ubiquinol + NAD(+) + 4 H(+)(out). Core subunit of the mitochondrial membrane respiratory chain NADH dehydrogenase (Complex I) that is believed to belong to the minimal assembly required for catalysis. Complex I functions in the transfer of electrons from NADH to the respiratory chain. The immediate electron acceptor for the enzyme is believed to be ubiquinone. This is NADH-ubiquinone oxidoreductase chain 4L (ND4L) from Sarcophyton glaucum (Toadstool umbrella leather coral).